Here is a 115-residue protein sequence, read N- to C-terminus: Large ribosomal subunit protein bL20 (115 aa).

The protein belongs to the bacterial ribosomal protein bL20 family.

Its function is as follows. Binds directly to 23S ribosomal RNA and is necessary for the in vitro assembly process of the 50S ribosomal subunit. It is not involved in the protein synthesizing functions of that subunit. The chain is Large ribosomal subunit protein bL20 from Chlorobaculum tepidum (strain ATCC 49652 / DSM 12025 / NBRC 103806 / TLS) (Chlorobium tepidum).